We begin with the raw amino-acid sequence, 104 residues long: Guanidinium exporter (104 aa).

Residue Met1 is a topological domain, cytoplasmic. The helical transmembrane segment at Ala2–Gly19 threads the bilayer. Topologically, residues Leu20–Arg28 are periplasmic. Residues Leu29–Tyr48 form a helical membrane-spanning segment. At Ala49 to Pro54 the chain is on the cytoplasmic side. The helical transmembrane segment at Ala55–Leu77 threads the bilayer. Residues Leu78–Ser81 are Periplasmic-facing. Residues Ala82–Leu100 form a helical membrane-spanning segment. Topologically, residues Lys101 to Ser104 are cytoplasmic.

The protein belongs to the drug/metabolite transporter (DMT) superfamily. Small multidrug resistance (SMR) (TC 2.A.7.1) family. Gdx/SugE subfamily.

It is found in the cell inner membrane. Guanidinium ion exporter. Couples guanidinium export to the proton motive force, exchanging one guanidinium ion for two protons. In Yersinia pestis, this protein is Guanidinium exporter.